A 268-amino-acid polypeptide reads, in one-letter code: Ribosomal RNA small subunit methyltransferase A (268 aa).

Positions 18, 20, 45, 66, 91, and 112 each coordinate S-adenosyl-L-methionine.

This sequence belongs to the class I-like SAM-binding methyltransferase superfamily. rRNA adenine N(6)-methyltransferase family. RsmA subfamily.

The protein resides in the cytoplasm. The enzyme catalyses adenosine(1518)/adenosine(1519) in 16S rRNA + 4 S-adenosyl-L-methionine = N(6)-dimethyladenosine(1518)/N(6)-dimethyladenosine(1519) in 16S rRNA + 4 S-adenosyl-L-homocysteine + 4 H(+). Functionally, specifically dimethylates two adjacent adenosines (A1518 and A1519) in the loop of a conserved hairpin near the 3'-end of 16S rRNA in the 30S particle. May play a critical role in biogenesis of 30S subunits. This Shewanella frigidimarina (strain NCIMB 400) protein is Ribosomal RNA small subunit methyltransferase A.